The primary structure comprises 128 residues: Saitohin (128 aa).

The segment at 77–128 is disordered; sequence SYSSEESSRNGAEQGRQLSIEGPFQGQNCPSHPAAALPLPMRGESQATSCQV.

Interacts with PRDX6.

The protein resides in the cytoplasm. Its subcellular location is the nucleus. This Gorilla gorilla gorilla (Western lowland gorilla) protein is Saitohin (STH).